Reading from the N-terminus, the 1616-residue chain is Putative inactive phenolphthiocerol synthesis polyketide synthase type I Pks1 (1616 aa).

The acyltransferase stretch occupies residues 83-397 (TVVVFPGQGA…GQVFTTGVPV (315 aa)). Residue Ser174 is the For acyltransferase activity of the active site. The segment at 445–567 (HALLGAVVER…GMLGVAAAET (123 aa)) is N-terminal hotdog fold. The tract at residues 445-605 (HALLGAVVER…YAYGPAFQGL (161 aa)) is dehydratase. A PKS/mFAS DH domain is found at 445 to 719 (HALLGAVVER…TRPITAEQLR (275 aa)). The active-site Proton acceptor; for dehydratase activity is the His477. Positions 579–719 (AESVDISDGY…TRPITAEQLR (141 aa)) are C-terminal hotdog fold. The active-site Proton donor; for dehydratase activity is the Asp640. The interval 910 to 1215 (GTLEDLVIQP…QARHIGKVVL (306 aa)) is enoylreductase. NADP(+) is bound by residues 1040–1057 (VLIH…VQLA) and 1229–1244 (TVVI…GVLA). Residues 1228 to 1409 (GTVVITGATG…SLAWGLWEQP (182 aa)) are beta-ketoacyl reductase. Residues 1514-1589 (ELLVGLVCLQ…AVAEYVAQQM (76 aa)) enclose the Carrier domain. The residue at position 1549 (Ser1549) is an O-(pantetheine 4'-phosphoryl)serine. The segment covering 1588 to 1604 (QMSGSRPTESGDPTSQV) has biased composition (polar residues). A disordered region spans residues 1588-1616 (QMSGSRPTESGDPTSQVVEPAAAEVSVHA).

Pantetheine 4'-phosphate is required as a cofactor.

Its pathway is lipid metabolism; fatty acid biosynthesis. Functionally, may play a role in phthiocerol biosynthesis. This chain is Putative inactive phenolphthiocerol synthesis polyketide synthase type I Pks1 (pks1), found in Mycobacterium tuberculosis (strain ATCC 25618 / H37Rv).